We begin with the raw amino-acid sequence, 1066 residues long: Isoleucine--tRNA ligase (1066 aa).

The 'HIGH' region motif lies at 47 to 57 (PYTTGYIHLGT). Residues 594-598 (KMSKS) carry the 'KMSKS' region motif. An ATP-binding site is contributed by lysine 597.

It belongs to the class-I aminoacyl-tRNA synthetase family. IleS type 2 subfamily. Monomer. The cofactor is Zn(2+).

The protein resides in the cytoplasm. The catalysed reaction is tRNA(Ile) + L-isoleucine + ATP = L-isoleucyl-tRNA(Ile) + AMP + diphosphate. Catalyzes the attachment of isoleucine to tRNA(Ile). As IleRS can inadvertently accommodate and process structurally similar amino acids such as valine, to avoid such errors it has two additional distinct tRNA(Ile)-dependent editing activities. One activity is designated as 'pretransfer' editing and involves the hydrolysis of activated Val-AMP. The other activity is designated 'posttransfer' editing and involves deacylation of mischarged Val-tRNA(Ile). This chain is Isoleucine--tRNA ligase, found in Methanocorpusculum labreanum (strain ATCC 43576 / DSM 4855 / Z).